Here is a 134-residue protein sequence, read N- to C-terminus: Arsenate reductase (134 aa).

Active-site nucleophile residues include Cys-11, Cys-83, and Cys-90. 2 disulfide bridges follow: Cys-11–Cys-83 and Cys-83–Cys-90.

It belongs to the low molecular weight phosphotyrosine protein phosphatase family. Thioredoxin-coupled ArsC subfamily.

Its subcellular location is the cytoplasm. The enzyme catalyses arsenate + [thioredoxin]-dithiol + H(+) = arsenite + [thioredoxin]-disulfide + H2O. Functionally, catalyzes the reduction of arsenate [As(V)] to arsenite [As(III)]. This Bacillus anthracis (strain A0248) protein is Arsenate reductase.